We begin with the raw amino-acid sequence, 1054 residues long: CCAAT/enhancer-binding protein zeta (1054 aa).

Over residues 1–20 (MAAVKEPLEFHAKRPWRPEE) the composition is skewed to basic and acidic residues. Disordered stretches follow at residues 1 to 42 (MAAV…GFSL) and 102 to 160 (VEED…PKVK). The segment covering 21-34 (AVEDPDEEDEDNTS) has biased composition (acidic residues). Residues 109–120 (EKENSSKKEVKI) show a composition bias toward basic and acidic residues. Ser-113 bears the Phosphoserine mark. The span at 124–138 (NNKNTAESQRTSVNK) shows a compositional bias: polar residues. Ser-629 bears the Phosphoserine mark. Residue Lys-695 is modified to N6-acetyllysine. Ser-835 carries the phosphoserine modification. 2 disordered regions span residues 873–902 (RTKG…DEVS) and 915–969 (DEDG…KKRN). 2 stretches are compositionally biased toward acidic residues: residues 882 to 902 (LDED…DEVS) and 915 to 933 (DEDG…ESVP). 3 positions are modified to phosphoserine: Ser-959, Ser-973, and Ser-978. A disordered region spans residues 1031-1054 (IIKKKKHFKKKRIKTTQKTKKQRK).

It belongs to the CBF/MAK21 family.

It is found in the nucleus. Functionally, stimulates transcription from the HSP70 promoter. The sequence is that of CCAAT/enhancer-binding protein zeta (CEBPZ) from Homo sapiens (Human).